We begin with the raw amino-acid sequence, 255 residues long: Taurine import ATP-binding protein TauB (255 aa).

Residues 2–229 enclose the ABC transporter domain; the sequence is LQISHLYADY…RFVAGESSRS (228 aa). Residue 34–41 coordinates ATP; the sequence is GPSGCGKT.

The protein belongs to the ABC transporter superfamily. Taurine importer (TC 3.A.1.17.1) family. The complex is composed of two ATP-binding proteins (TauB), two transmembrane proteins (TauC) and a solute-binding protein (TauA).

It is found in the cell inner membrane. It catalyses the reaction taurine(out) + ATP + H2O = taurine(in) + ADP + phosphate + H(+). Its function is as follows. Part of the ABC transporter complex TauABC involved in taurine import. Responsible for energy coupling to the transport system. In Shigella boydii serotype 4 (strain Sb227), this protein is Taurine import ATP-binding protein TauB.